The primary structure comprises 825 residues: E3 ubiquitin-protein ligase ICP0 (825 aa).

The span at 1 to 10 (MEPRPGTSSR) shows a compositional bias: polar residues. A disordered region spans residues 1 to 121 (MEPRPGTSSR…VGEEEAEAGG (121 aa)). A compositionally biased stretch (acidic residues) spans 46-57 (DSEEETEVGISD). The RING-type zinc-finger motif lies at 126–167 (CAVCTDEIAPPLRCQSFPCLHPFCIPCMKTWIPLRNTCPLCN). 3 disordered regions span residues 221-312 (RSLS…GGGP), 325-683 (PPAA…PAPG), and 803-825 (RHPWSREQGAPAPAGDAPAGHGE). The segment covering 242-251 (TDDEDDDLAD) has biased composition (acidic residues). Low complexity-rich tracts occupy residues 273-283 (TRGTSQPAATR), 290-303 (PRSSSSGGAPLRAG), and 350-367 (PPARQPRAAQEPPIVISD). Pro residues predominate over residues 368–379 (SPPPSPRRPAGP). Low complexity-rich tracts occupy residues 380 to 394 (GPLSFVSSSSAQVSS) and 402 to 439 (PQSSGRAARPRAAVAPRVRSPPRAAAAPVVSASADAAG). A compositionally biased stretch (polar residues) spans 456–468 (RMTQAQTDTQAQS). Over residues 479-491 (GSGGPGAEGGPGV) the composition is skewed to gly residues. Composition is skewed to low complexity over residues 492–510 (PRGTNTPGAAPHAAEGAAA) and 519–540 (DSGPAASSSASSSAAPRSPLAP). Over residues 552–563 (RAPDSDSGDRGH) the composition is skewed to basic and acidic residues. Positions 567–641 (APASAGAAPP…GGSVASASGA (75 aa)) are enriched in low complexity. Over residues 658–667 (GPRKCARKTR) the composition is skewed to basic residues. Residues 811 to 825 (GAPAPAGDAPAGHGE) show a composition bias toward low complexity.

Post-translationally, auto-ubiquitinated.

The enzyme catalyses S-ubiquitinyl-[E2 ubiquitin-conjugating enzyme]-L-cysteine + [acceptor protein]-L-lysine = [E2 ubiquitin-conjugating enzyme]-L-cysteine + N(6)-ubiquitinyl-[acceptor protein]-L-lysine.. Its function is as follows. Evades nuclear antiviral defenses triggered by dsDNA viruses. Acts during the initial stages of lytic infection and the reactivation of latent viral genome. Prevents the antiviral effect of nuclear bodies by degrading host PML and SP100. Prevents antiviral response to viral DNA induced by IFI16 by degrading it. Additionally, inhibits host IRF3 nuclear signaling to prevent interferon production by the infected cells. This is E3 ubiquitin-protein ligase ICP0 (RL2) from Homo sapiens (Human).